The primary structure comprises 431 residues: D-inositol 3-phosphate glycosyltransferase (431 aa).

His21 contributes to the 1D-myo-inositol 3-phosphate binding site. UDP-N-acetyl-alpha-D-glucosamine contacts are provided by residues 27 to 28 and Gly35; that span reads QP. Residues 32 to 37, Arg90, Tyr123, Thr147, and Arg167 each bind 1D-myo-inositol 3-phosphate; that span reads DAGGMN. Residues Arg241, Lys246, and Gln307 each contribute to the UDP-N-acetyl-alpha-D-glucosamine site. Mg(2+)-binding residues include Tyr316, Arg317, and Ala319. UDP-N-acetyl-alpha-D-glucosamine contacts are provided by Glu329 and Glu337. Thr343 is a binding site for Mg(2+).

Belongs to the glycosyltransferase group 1 family. MshA subfamily. In terms of assembly, homodimer.

It carries out the reaction 1D-myo-inositol 3-phosphate + UDP-N-acetyl-alpha-D-glucosamine = 1D-myo-inositol 2-acetamido-2-deoxy-alpha-D-glucopyranoside 3-phosphate + UDP + H(+). In terms of biological role, catalyzes the transfer of a N-acetyl-glucosamine moiety to 1D-myo-inositol 3-phosphate to produce 1D-myo-inositol 2-acetamido-2-deoxy-glucopyranoside 3-phosphate in the mycothiol biosynthesis pathway. This is D-inositol 3-phosphate glycosyltransferase from Saccharomonospora viridis (strain ATCC 15386 / DSM 43017 / JCM 3036 / CCUG 5913 / NBRC 12207 / NCIMB 9602 / P101) (Thermoactinomyces viridis).